The chain runs to 361 residues: Chorismate synthase (361 aa).

NADP(+) is bound at residue arginine 47. FMN is bound by residues arginine 124–serine 126, glycine 286, lysine 301–threonine 305, and arginine 327.

Belongs to the chorismate synthase family. As to quaternary structure, homotetramer. It depends on FMNH2 as a cofactor.

The enzyme catalyses 5-O-(1-carboxyvinyl)-3-phosphoshikimate = chorismate + phosphate. Its pathway is metabolic intermediate biosynthesis; chorismate biosynthesis; chorismate from D-erythrose 4-phosphate and phosphoenolpyruvate: step 7/7. In terms of biological role, catalyzes the anti-1,4-elimination of the C-3 phosphate and the C-6 proR hydrogen from 5-enolpyruvylshikimate-3-phosphate (EPSP) to yield chorismate, which is the branch point compound that serves as the starting substrate for the three terminal pathways of aromatic amino acid biosynthesis. This reaction introduces a second double bond into the aromatic ring system. This Prochlorococcus marinus (strain NATL2A) protein is Chorismate synthase.